The sequence spans 885 residues: Putative membrane protein YdgH (885 aa).

7 consecutive transmembrane segments (helical) span residues 9 to 29 (WAIAAIVLALTVVLSLFSPNL), 181 to 201 (IIGLLLIVFRSVVTPFIPIVV), 202 to 222 (VGFSYLISQSILGILVYNVDF), 227 to 247 (FTQTFLVAILFGIGTDYCILL), 278 to 298 (ISGFAVLIGFSALGFAKFAIF), 304 to 324 (VAVGVGILMIILYTLLPLFMV), and 354 to 374 (VARPFLFIVITVVITLPFILT). Residues 498–518 (MAGQTGSASNGGSGGSLGDAA) are disordered. 5 helical membrane-spanning segments follow: residues 716-736 (MVIMIIGLFIVLTILFRSMIM), 740-760 (MIASLLLTYYTSISITELIFV), 772-792 (VPFFSFVILIALGVDYSIFLL), 817-837 (VIITAAIILAGTFAAMMPSGV), and 847-867 (IIIGLLLYGLVILPLFIPAII).

The protein belongs to the resistance-nodulation-cell division (RND) (TC 2.A.6) family. MmpL subfamily.

The protein resides in the cell membrane. The polypeptide is Putative membrane protein YdgH (ydgH) (Bacillus subtilis (strain 168)).